Here is a 603-residue protein sequence, read N- to C-terminus: Adenine deaminase (603 aa).

The protein belongs to the metallo-dependent hydrolases superfamily. Adenine deaminase family. In terms of assembly, homodimer. Mn(2+) is required as a cofactor.

It carries out the reaction adenine + H2O + H(+) = hypoxanthine + NH4(+). The chain is Adenine deaminase from Klebsiella pneumoniae (strain 342).